We begin with the raw amino-acid sequence, 256 residues long: Protein FixA (256 aa).

This sequence belongs to the ETF beta-subunit/FixA family. As to quaternary structure, heterodimer of FixA and FixB.

The protein operates within amine and polyamine metabolism; carnitine metabolism. In terms of biological role, required for anaerobic carnitine reduction. May bring reductant to CaiA. The chain is Protein FixA from Escherichia fergusonii (strain ATCC 35469 / DSM 13698 / CCUG 18766 / IAM 14443 / JCM 21226 / LMG 7866 / NBRC 102419 / NCTC 12128 / CDC 0568-73).